Reading from the N-terminus, the 50-residue chain is Large ribosomal subunit protein bL33B (50 aa).

It belongs to the bacterial ribosomal protein bL33 family.

The protein is Large ribosomal subunit protein bL33B of Streptococcus pyogenes serotype M1.